The chain runs to 161 residues: Succinate dehydrogenase assembly factor 2, mitochondrial (161 aa).

The transit peptide at 1 to 31 (MSLLRVTRSSGHLSAVCRLPARSISTTSILL) directs the protein to the mitochondrion.

The protein belongs to the SDHAF2 family. Interacts with the flavoprotein subunit within the SDH catalytic dimer.

The protein localises to the mitochondrion matrix. Its function is as follows. Plays an essential role in the assembly of succinate dehydrogenase (SDH), an enzyme complex (also referred to as respiratory complex II) that is a component of both the tricarboxylic acid (TCA) cycle and the mitochondrial electron transport chain, and which couples the oxidation of succinate to fumarate with the reduction of ubiquinone (coenzyme Q) to ubiquinol. Required for flavinylation (covalent attachment of FAD) of the flavoprotein subunit of the SDH catalytic dimer. This chain is Succinate dehydrogenase assembly factor 2, mitochondrial, found in Aedes aegypti (Yellowfever mosquito).